The chain runs to 324 residues: Probable uridine nucleosidase 1 (324 aa).

Residue His248 is part of the active site.

The protein belongs to the IUNH family.

The protein resides in the cytoplasm. The catalysed reaction is uridine + H2O = D-ribose + uracil. Its function is as follows. Involved in pyrimidine breakdown. The sequence is that of Probable uridine nucleosidase 1 (URH1) from Oryza sativa subsp. japonica (Rice).